Reading from the N-terminus, the 201-residue chain is CASP-like protein 2B2 (201 aa).

The Cytoplasmic segment spans residues 1-28 (MSYLGVGVSPGNVTGSSTKMKLIDRKVR). Residues 29-49 (VTELILRSLVCAFALVAAILV) traverse the membrane as a helical segment. Over 50–71 (ATDVQVREIFTIQKKAKFTDMK) the chain is Extracellular. The helical transmembrane segment at 72–92 (ALVFLVVINGIAAGYSLVQAV) threads the bilayer. At 93–108 (CCLVGLMKGSVLLSEP) the chain is on the cytoplasmic side. A helical membrane pass occupies residues 109-129 (LAWAIFFGDQAVAYLCVAGVA). The Extracellular segment spans residues 130–166 (AAAQSAAFAKLGQPELQWMKICDMYGKFCNQVGEGIA). The chain crosses the membrane as a helical span at residues 167 to 187 (SALFACIGMVLISCISAFGVF). The Cytoplasmic portion of the chain corresponds to 188–201 (RLYGGSKPRQSSRW).

It belongs to the Casparian strip membrane proteins (CASP) family. In terms of assembly, homodimer and heterodimers.

It is found in the cell membrane. The polypeptide is CASP-like protein 2B2 (Arabidopsis lyrata subsp. lyrata (Lyre-leaved rock-cress)).